An 84-amino-acid chain; its full sequence is U1-theraphotoxin-Hs1a (84 aa).

The N-terminal stretch at 1–22 is a signal peptide; the sequence is MKVTLIAILTCAAVLVLHTTAA. Positions 23 to 48 are excised as a propeptide; the sequence is EELEESQLMEVGMPDTELAAVDEERL. Cystine bridges form between C51/C65, C55/C76, and C70/C81.

It belongs to the neurotoxin 12 (Hwtx-2) family. 02 (Hwtx-2) subfamily. As to expression, expressed by the venom gland.

It localises to the secreted. Blocks neuromuscular transmission. Acts cooperatively to potentiate the activity of huwentoxin-I. Paralyzes locusts and kills mice following intracerebroventricular injection. The sequence is that of U1-theraphotoxin-Hs1a from Cyriopagopus schmidti (Chinese bird spider).